Here is a 100-residue protein sequence, read N- to C-terminus: Ubiquitin-related modifier 1 homolog (100 aa).

Glycine 100 is subject to 1-thioglycine. Glycine 100 participates in a covalent cross-link: Glycyl lysine isopeptide (Gly-Lys) (interchain with K-? in acceptor proteins).

The protein belongs to the URM1 family. C-terminal thiocarboxylation occurs in 2 steps, it is first acyl-adenylated (-COAMP) via the hesA/moeB/thiF part of the MOCS3 homolog, then thiocarboxylated (-COSH) via the rhodanese domain of the MOCS3 homolog.

The protein localises to the cytoplasm. Its pathway is tRNA modification; 5-methoxycarbonylmethyl-2-thiouridine-tRNA biosynthesis. Acts as a sulfur carrier required for 2-thiolation of mcm(5)S(2)U at tRNA wobble positions of cytosolic tRNA(Lys), tRNA(Glu) and tRNA(Gln). Serves as sulfur donor in tRNA 2-thiolation reaction by being thiocarboxylated (-COSH) at its C-terminus by MOCS3. The sulfur is then transferred to tRNA to form 2-thiolation of mcm(5)S(2)U. Also acts as a ubiquitin-like protein (UBL) that is covalently conjugated via an isopeptide bond to lysine residues of target proteins. The thiocarboxylated form serves as substrate for conjugation and oxidative stress specifically induces the formation of UBL-protein conjugates. The protein is Ubiquitin-related modifier 1 homolog of Oryza sativa subsp. japonica (Rice).